Consider the following 135-residue polypeptide: Fatty acid-binding protein 5 (135 aa).

An N-acetylalanine modification is found at A2. K17 carries the N6-acetyllysine modification. The short motif at 24–34 is the Nuclear localization signal element; the sequence is KELGVGIALRK. C43 and R109 together coordinate N-eicosanoyl ethanolamine. Residues C120 and C127 are joined by a disulfide bond. Residue 129–131 coordinates (9Z,12Z)-octadecadienoate; the sequence is RIY. An N-eicosanoyl ethanolamine-binding site is contributed by Y131. Y131 is a hexadecanoate binding site. Y131 bears the Phosphotyrosine mark.

The protein belongs to the calycin superfamily. Fatty-acid binding protein (FABP) family. As to quaternary structure, monomer. Homodimer. As to expression, keratinocytes; highly expressed in psoriatic skin. Expressed in brain gray matter.

It localises to the cytoplasm. The protein localises to the nucleus. It is found in the synapse. The protein resides in the postsynaptic density. Its subcellular location is the secreted. The enzyme catalyses hexadecanoate(out) = hexadecanoate(in). The catalysed reaction is (9Z,12Z)-octadecadienoate(out) = (9Z,12Z)-octadecadienoate(in). It catalyses the reaction (9Z)-octadecenoate(out) = (9Z)-octadecenoate(in). Its function is as follows. Intracellular carrier for long-chain fatty acids and related active lipids, such as endocannabinoids, that regulate the metabolism and actions of the ligands they bind. In addition to the cytosolic transport, selectively delivers specific fatty acids from the cytosol to the nucleus, wherein they activate nuclear receptors. Delivers retinoic acid to the nuclear receptor peroxisome proliferator-activated receptor delta; which promotes proliferation and survival. May also serve as a synaptic carrier of endocannabinoid at central synapses and thus controls retrograde endocannabinoid signaling. Modulates inflammation by regulating PTGES induction via NF-kappa-B activation, and prostaglandin E2 (PGE2) biosynthesis during inflammation. May be involved in keratinocyte differentiation. This Homo sapiens (Human) protein is Fatty acid-binding protein 5.